A 366-amino-acid chain; its full sequence is NAD(P)H-quinone oxidoreductase subunit 1, chloroplastic (366 aa).

7 helical membrane passes run 28 to 48 (IWLL…VLVI), 105 to 125 (IAVI…HLVL), 128 to 148 (LSIG…GLLM), 250 to 270 (SGIK…VSSL), 271 to 291 (FVTV…FIFI), 303 to 323 (IFGM…FLFI), and 346 to 366 (FLLP…LLSL).

Belongs to the complex I subunit 1 family. NDH is composed of at least 16 different subunits, 5 of which are encoded in the nucleus.

Its subcellular location is the plastid. It is found in the chloroplast thylakoid membrane. The catalysed reaction is a plastoquinone + NADH + (n+1) H(+)(in) = a plastoquinol + NAD(+) + n H(+)(out). It carries out the reaction a plastoquinone + NADPH + (n+1) H(+)(in) = a plastoquinol + NADP(+) + n H(+)(out). NDH shuttles electrons from NAD(P)H:plastoquinone, via FMN and iron-sulfur (Fe-S) centers, to quinones in the photosynthetic chain and possibly in a chloroplast respiratory chain. The immediate electron acceptor for the enzyme in this species is believed to be plastoquinone. Couples the redox reaction to proton translocation, and thus conserves the redox energy in a proton gradient. The sequence is that of NAD(P)H-quinone oxidoreductase subunit 1, chloroplastic from Nandina domestica (Heavenly bamboo).